The chain runs to 399 residues: E3 ubiquitin-protein ligase APD4 (399 aa).

Helical transmembrane passes span 42–62 (FGIIMGLWFFASVCLIFGVYG) and 284–304 (LIAYGSFTGVLLSFMLVAIHF). An RING-type zinc finger spans residues 348–387 (CAICFDAPRDCCFLPCGHCVSCYQCGTKIKRTKGRCPICR).

As to expression, expressed in the shoot apical meristems (SAM), root tips and inflorescences.

Its subcellular location is the endomembrane system. The protein resides in the vacuole membrane. The enzyme catalyses S-ubiquitinyl-[E2 ubiquitin-conjugating enzyme]-L-cysteine + [acceptor protein]-L-lysine = [E2 ubiquitin-conjugating enzyme]-L-cysteine + N(6)-ubiquitinyl-[acceptor protein]-L-lysine.. It functions in the pathway protein modification; protein ubiquitination. Involved in pollen mitosis II (PMII) regulation during male gametogenesis. This Arabidopsis thaliana (Mouse-ear cress) protein is E3 ubiquitin-protein ligase APD4.